The sequence spans 138 residues: Basic phospholipase A2 PL-Y (138 aa).

A signal peptide spans methionine 1 to glycine 16. Intrachain disulfides connect cysteine 42–cysteine 131, cysteine 44–cysteine 60, cysteine 59–cysteine 111, cysteine 65–cysteine 138, cysteine 66–cysteine 104, cysteine 73–cysteine 97, and cysteine 91–cysteine 102. Ca(2+) is bound by residues tyrosine 43, glycine 45, and glycine 47. Histidine 63 is an active-site residue. A Ca(2+)-binding site is contributed by aspartate 64. Aspartate 105 is an active-site residue.

The protein belongs to the phospholipase A2 family. Group II subfamily. D49 sub-subfamily. Ca(2+) is required as a cofactor. Expressed by the venom gland.

It localises to the secreted. It catalyses the reaction a 1,2-diacyl-sn-glycero-3-phosphocholine + H2O = a 1-acyl-sn-glycero-3-phosphocholine + a fatty acid + H(+). Functionally, snake venom phospholipase A2 (PLA2) that can cleave arachidonate at the sn-2 position from phospholipides in the micellar state or in bilayer membranes. PLA2 catalyzes the calcium-dependent hydrolysis of the 2-acyl groups in 3-sn-phosphoglycerides. The polypeptide is Basic phospholipase A2 PL-Y (Protobothrops flavoviridis (Habu)).